The chain runs to 160 residues: Cytochrome b6-f complex subunit 4 (160 aa).

Helical transmembrane passes span 36-56, 95-115, and 131-151; these read LLYV…GLSV, LLGV…PFIE, and LTFI…CVPI.

It belongs to the cytochrome b family. PetD subfamily. The 4 large subunits of the cytochrome b6-f complex are cytochrome b6, subunit IV (17 kDa polypeptide, petD), cytochrome f and the Rieske protein, while the 4 small subunits are petG, petL, petM and petN. The complex functions as a dimer.

It localises to the plastid. Its subcellular location is the chloroplast thylakoid membrane. Component of the cytochrome b6-f complex, which mediates electron transfer between photosystem II (PSII) and photosystem I (PSI), cyclic electron flow around PSI, and state transitions. The chain is Cytochrome b6-f complex subunit 4 from Phaeodactylum tricornutum (strain CCAP 1055/1).